The primary structure comprises 229 residues: Coiled-coil domain-containing protein 134 (229 aa).

The first 22 residues, 1 to 22 (MDLLQFLAAFSVLLWPGTEVTG), serve as a signal peptide directing secretion. N-linked (GlcNAc...) asparagine glycosylation is present at Asn-148. A disordered region spans residues 182–229 (FKTDQTEFIPSTDPFQKALREEEKRRKKEERRKEIRKGPRISRSQSEL). The stretch at 196–218 (FQKALREEEKRRKKEERRKEIRK) forms a coiled coil. Positions 226–229 (QSEL) match the Prevents secretion from ER motif.

It belongs to the CCDC134 family. As to quaternary structure, interacts with TADA2A. Associates with the PCAF complex via TADA2A binding. Post-translationally, O-glycosylated, with additional sialic acid modifications.

It localises to the endoplasmic reticulum lumen. The protein localises to the secreted. Its subcellular location is the cytoplasm. It is found in the nucleus. Molecular adapter required to prevent protein hyperglycosylation of HSP90B1: during translation, associates with nascent HSP90B1 and the STT3A catalytic component of the OST-A complex and tethers them to a specialized translocon that forms a microenvironment for HSP90B1 folding. In the CCDC134-containing translocon, STT3A associates with the SRT pseudosubstrate motif of HSP90B1, preventing access to facultative glycosylation sites until folding is completed, preventing hyperglycosylation and subsequent degradation of HSP90B1. In extracellular secreted form, promotes proliferation and activation of CD8(+) T-cells, suggesting a cytokine-like function. May inhibit ERK and JNK signaling activity. May suppress cell migration and invasion activity, via its effects on ERK and JNK signaling. May also localize in the nucleus: enhances stability of the PCAF histone acetyltransferase (HAT) complex member TADA2A and thus promotes PCAF-mediated histone acetyltransferase activity. Has a critical role in the regulation of osteogenesis and bone development. The chain is Coiled-coil domain-containing protein 134 (Ccdc134) from Mus musculus (Mouse).